A 593-amino-acid polypeptide reads, in one-letter code: Lipolysis-stimulated lipoprotein receptor (593 aa).

Residues 1–35 (MAPAAGACAGAPDSHPATVVFVCLFLIIFCPDPAS) form the signal peptide. Residues 36 to 206 (AIQVTVSDPY…PGFRAGPLED (171 aa)) are Extracellular-facing. One can recognise an Ig-like V-type domain in the interval 89-181 (PASVDNQLNA…DLDGNNEAYA (93 aa)). Cys113 and Cys165 are oxidised to a cystine. A helical membrane pass occupies residues 207-227 (WLFVVVVCLASLLLFLLLGIC). At 228–593 (WCQCCPHTCC…LALSRESLVV (366 aa)) the chain is on the cytoplasmic side. At Thr283 the chain carries Phosphothreonine. Phosphoserine occurs at positions 308, 314, 332, 375, and 379. Positions 375–387 (SEVTSLHEDDWRS) are enriched in basic and acidic residues. Residues 375–578 (SEVTSLHEDD…ETDSQASRER (204 aa)) are disordered. Thr396 carries the phosphothreonine modification. Residues Ser407, Ser410, and Ser436 each carry the phosphoserine modification. Residues 435 to 444 (RSVDALDDIN) are compositionally biased toward basic and acidic residues. A compositionally biased stretch (low complexity) spans 445–460 (RPGSTESGRSSPPSSG). A phosphoserine mark is found at Ser471 and Ser473. Residues 472 to 550 (RSRDDLYDPD…GSGERRRVYR (79 aa)) show a composition bias toward basic and acidic residues. A Phosphotyrosine modification is found at Tyr478. Ser575 carries the post-translational modification Phosphoserine. Residue Lys582 forms a Glycyl lysine isopeptide (Lys-Gly) (interchain with G-Cter in ubiquitin) linkage. Phosphoserine is present on residues Ser587 and Ser590.

This sequence belongs to the immunoglobulin superfamily. LISCH7 family. In terms of assembly, homotrimer or homotetramer constituted of isoform 1 and/or isoform 2 and isoform 3. Assembles into cell-cell contacts. Interacts (via the cytoplasmic domain) with MARVELD2 (via C-terminal cytoplasmic domain); the interaction is required to recruit MARVELD2 to tricellular contacts. Interacts with OCLN. In terms of processing, phosphorylation at Ser-308 by MAPK8/JNK1 and MAPK9/JNK2 may be required for exclusive localization at tricellular tight junstions. Post-translationally, polyubiquitinated at Lys-582 via 'Lys-63'-linked ubiquitin chains; deubiquitinated by USP53. As to expression, specifically expressed in liver. Also detected in kidney and lung.

The protein resides in the cell membrane. It localises to the cell junction. Its subcellular location is the tight junction. Its function is as follows. Probable role in the clearance of triglyceride-rich lipoprotein from blood. Binds chylomicrons, LDL and VLDL in presence of free fatty acids and allows their subsequent uptake in the cells. Maintains epithelial barrier function by recruiting MARVELD2/tricellulin to tricellular tight junctions. The protein is Lipolysis-stimulated lipoprotein receptor of Rattus norvegicus (Rat).